The following is a 290-amino-acid chain: Glutaredoxin domain-containing cysteine-rich protein 1 (290 aa).

Residues 127–234 (LQQPSTDLEF…DILTKIERVQ (108 aa)) enclose the Glutaredoxin domain.

This sequence belongs to the GRXCR1 family. In terms of tissue distribution, expressed at low levels in adult lung, brain and duodenum with moderate levels in testis. Highly expressed in fetal cochlea.

Its subcellular location is the cell projection. It is found in the stereocilium. The protein localises to the microvillus. The protein resides in the kinocilium. Functionally, may play a role in actin filament architecture in developing stereocilia of sensory cells. The protein is Glutaredoxin domain-containing cysteine-rich protein 1 (GRXCR1) of Homo sapiens (Human).